A 764-amino-acid chain; its full sequence is Protein translocase subunit SecA 2 (764 aa).

ATP contacts are provided by residues Gln83, 101-105 (GEGKT), and Asp490.

This sequence belongs to the SecA family. In terms of assembly, monomer and homodimer. Part of the essential Sec protein translocation apparatus which comprises SecA, SecYEG and auxiliary proteins SecDF. Other proteins may also be involved.

Its subcellular location is the cell membrane. The protein localises to the cytoplasm. The enzyme catalyses ATP + H2O + cellular proteinSide 1 = ADP + phosphate + cellular proteinSide 2.. In terms of biological role, part of the Sec protein translocase complex. Interacts with the SecYEG preprotein conducting channel. Has a central role in coupling the hydrolysis of ATP to the transfer of proteins into and across the cell membrane, serving as an ATP-driven molecular motor driving the stepwise translocation of polypeptide chains across the membrane. This chain is Protein translocase subunit SecA 2, found in Corynebacterium diphtheriae (strain ATCC 700971 / NCTC 13129 / Biotype gravis).